Consider the following 1023-residue polypeptide: Lon protease homolog (1023 aa).

515–522 serves as a coordination point for ATP; the sequence is GPPGVGKT. Positions 810–1003 constitute a Lon proteolytic domain; that stretch reads TNMIGVINGL…IEIITDPNVI (194 aa). Ser906 is a catalytic residue.

This sequence belongs to the peptidase S16 family.

In Acanthamoeba polyphaga (Amoeba), this protein is Lon protease homolog.